The following is a 274-amino-acid chain: Undecaprenyl-diphosphatase (274 aa).

7 helical membrane passes run 4–24, 46–63, 82–102, 109–129, 184–204, 218–238, and 249–269; these read ILLLKALILGIVEGLTEFLPI, LFEIVIQSGAILAVVWEY, KFILNLFVAFLPLAILGLAFG, LFNPVTVASTFILGAFVILWA, ATEFSFFLAIPTLIVATFYQL, MWAVGFVAAFVSAFLCVRWLL, and FAWYRIAFGIVVLATWQFGWV.

This sequence belongs to the UppP family.

It is found in the cell inner membrane. The enzyme catalyses di-trans,octa-cis-undecaprenyl diphosphate + H2O = di-trans,octa-cis-undecaprenyl phosphate + phosphate + H(+). Catalyzes the dephosphorylation of undecaprenyl diphosphate (UPP). Confers resistance to bacitracin. This Dechloromonas aromatica (strain RCB) protein is Undecaprenyl-diphosphatase.